We begin with the raw amino-acid sequence, 215 residues long: Adenylate kinase (215 aa).

An ATP-binding site is contributed by 10–15 (GAGKGT). Residues 30 to 60 (STGDMLRAAIIKAGTEMGKQAKSVIDAGQLV) form an NMP region. AMP-binding positions include threonine 31, arginine 36, 58–60 (QLV), 86–89 (GFPR), and glutamine 93. The LID stretch occupies residues 123-160 (GRRAHLPSGRTYHVTFNPSKVEGQDDVTGEPLVIREDD). Residues arginine 124 and 133–134 (TY) each bind ATP. The AMP site is built by arginine 157 and arginine 168. Lysine 201 contacts ATP.

This sequence belongs to the adenylate kinase family. In terms of assembly, monomer.

The protein resides in the cytoplasm. It carries out the reaction AMP + ATP = 2 ADP. The protein operates within purine metabolism; AMP biosynthesis via salvage pathway; AMP from ADP: step 1/1. Catalyzes the reversible transfer of the terminal phosphate group between ATP and AMP. Plays an important role in cellular energy homeostasis and in adenine nucleotide metabolism. This is Adenylate kinase from Aliivibrio salmonicida (strain LFI1238) (Vibrio salmonicida (strain LFI1238)).